Consider the following 247-residue polypeptide: Histone acetyltransferase MCC1 (247 aa).

The N-acetyltransferase domain occupies 25-198 (IHYRPINPND…DAFLFVYFIN (174 aa)).

It belongs to the acetyltransferase family.

It carries out the reaction L-lysyl-[protein] + acetyl-CoA = N(6)-acetyl-L-lysyl-[protein] + CoA + H(+). Functionally, histone acetyltransferase that probably regulates acetylation status of histone H3 during meiosis. Histone acetylation may influence recombination and chromosome segregation. This Arabidopsis thaliana (Mouse-ear cress) protein is Histone acetyltransferase MCC1 (MCC1).